The sequence spans 353 residues: UDP-N-acetylglucosamine--N-acetylmuramyl-(pentapeptide) pyrophosphoryl-undecaprenol N-acetylglucosamine transferase (353 aa).

UDP-N-acetyl-alpha-D-glucosamine contacts are provided by residues 10 to 12 (TGG), Asn124, Ser183, and Gln283.

Belongs to the glycosyltransferase 28 family. MurG subfamily.

It localises to the cell inner membrane. The enzyme catalyses di-trans,octa-cis-undecaprenyl diphospho-N-acetyl-alpha-D-muramoyl-L-alanyl-D-glutamyl-meso-2,6-diaminopimeloyl-D-alanyl-D-alanine + UDP-N-acetyl-alpha-D-glucosamine = di-trans,octa-cis-undecaprenyl diphospho-[N-acetyl-alpha-D-glucosaminyl-(1-&gt;4)]-N-acetyl-alpha-D-muramoyl-L-alanyl-D-glutamyl-meso-2,6-diaminopimeloyl-D-alanyl-D-alanine + UDP + H(+). It functions in the pathway cell wall biogenesis; peptidoglycan biosynthesis. Its function is as follows. Cell wall formation. Catalyzes the transfer of a GlcNAc subunit on undecaprenyl-pyrophosphoryl-MurNAc-pentapeptide (lipid intermediate I) to form undecaprenyl-pyrophosphoryl-MurNAc-(pentapeptide)GlcNAc (lipid intermediate II). This chain is UDP-N-acetylglucosamine--N-acetylmuramyl-(pentapeptide) pyrophosphoryl-undecaprenol N-acetylglucosamine transferase, found in Helicobacter pylori (strain P12).